The primary structure comprises 71 residues: Large ribosomal subunit protein bL31 (71 aa).

The Zn(2+) site is built by Cys-16, Cys-18, Cys-38, and Cys-41.

This sequence belongs to the bacterial ribosomal protein bL31 family. Type A subfamily. In terms of assembly, part of the 50S ribosomal subunit. Zn(2+) is required as a cofactor.

Its function is as follows. Binds the 23S rRNA. The chain is Large ribosomal subunit protein bL31 from Chromobacterium violaceum (strain ATCC 12472 / DSM 30191 / JCM 1249 / CCUG 213 / NBRC 12614 / NCIMB 9131 / NCTC 9757 / MK).